A 611-amino-acid polypeptide reads, in one-letter code: Probable inactive purple acid phosphatase 27 (611 aa).

The first 18 residues, 1 to 18 (MARNFLLVLLWFIVQVSS), serve as a signal peptide directing secretion. 2 N-linked (GlcNAc...) asparagine glycosylation sites follow: Asn263 and Asn271. Asp293 provides a ligand contact to Fe cation. N-linked (GlcNAc...) asparagine glycosylation is present at Asn314. 2 residues coordinate Fe cation: Asp334 and Tyr337. Asp334 contributes to the Zn(2+) binding site. Zn(2+)-binding residues include Asn367, His456, and His498. Substrate is bound at residue Asn367. 498–500 (HVH) serves as a coordination point for substrate. A Fe cation-binding site is contributed by His500.

It belongs to the metallophosphoesterase superfamily. Purple acid phosphatase family. Homodimer. Requires Fe cation as cofactor. The cofactor is Zn(2+). Expressed in roots, stems, leaves, flowers and siliques.

It is found in the secreted. In Arabidopsis thaliana (Mouse-ear cress), this protein is Probable inactive purple acid phosphatase 27 (PAP27).